A 304-amino-acid chain; its full sequence is Oxygen-dependent coproporphyrinogen-III oxidase (304 aa).

Ser-93 contributes to the substrate binding site. Positions 97 and 107 each coordinate a divalent metal cation. The active-site Proton donor is the His-107. Residue 109 to 111 (NVR) coordinates substrate. Residues His-146 and His-176 each coordinate a divalent metal cation. An important for dimerization region spans residues 241-276 (YVEFNLVYDRGTLFGLQSGGRTESILMSLPPQVRWG). 259 to 261 (GGR) contacts substrate.

This sequence belongs to the aerobic coproporphyrinogen-III oxidase family. Homodimer. A divalent metal cation is required as a cofactor.

It is found in the cytoplasm. The catalysed reaction is coproporphyrinogen III + O2 + 2 H(+) = protoporphyrinogen IX + 2 CO2 + 2 H2O. It participates in porphyrin-containing compound metabolism; protoporphyrin-IX biosynthesis; protoporphyrinogen-IX from coproporphyrinogen-III (O2 route): step 1/1. Its function is as follows. Involved in the heme biosynthesis. Catalyzes the aerobic oxidative decarboxylation of propionate groups of rings A and B of coproporphyrinogen-III to yield the vinyl groups in protoporphyrinogen-IX. This chain is Oxygen-dependent coproporphyrinogen-III oxidase, found in Pseudomonas syringae pv. tomato (strain ATCC BAA-871 / DC3000).